The sequence spans 194 residues: NADH-quinone oxidoreductase subunit B (194 aa).

The tract at residues 1–26 (MGLTPSATKPEIAQAPQGIVDPSTGR) is disordered. 4 residues coordinate [4Fe-4S] cluster: Cys-73, Cys-74, Cys-138, and Cys-168.

Belongs to the complex I 20 kDa subunit family. NDH-1 is composed of 14 different subunits. Subunits NuoB, C, D, E, F, and G constitute the peripheral sector of the complex. It depends on [4Fe-4S] cluster as a cofactor.

It localises to the cell inner membrane. The catalysed reaction is a quinone + NADH + 5 H(+)(in) = a quinol + NAD(+) + 4 H(+)(out). NDH-1 shuttles electrons from NADH, via FMN and iron-sulfur (Fe-S) centers, to quinones in the respiratory chain. The immediate electron acceptor for the enzyme in this species is believed to be ubiquinone. Couples the redox reaction to proton translocation (for every two electrons transferred, four hydrogen ions are translocated across the cytoplasmic membrane), and thus conserves the redox energy in a proton gradient. This is NADH-quinone oxidoreductase subunit B from Xanthobacter autotrophicus (strain ATCC BAA-1158 / Py2).